We begin with the raw amino-acid sequence, 492 residues long: Dipeptide permease D (492 aa).

13 consecutive transmembrane segments (helical) span residues 14–34 (VVAL…LLIL), 49–69 (ALFS…GYLA), 91–111 (LVLG…AIIV), 138–158 (GGFS…PIAC), 167–187 (WAMG…IFLC), 212–232 (NWGW…VLFW), 236–256 (SVYA…RIYL), 269–289 (LIVV…QGGS), 312–332 (MFQS…AWLV), 344–364 (IWGK…ILTL), 379–399 (LMVL…PVAM), 413–433 (VLTG…AGVI), and 458–478 (VFSQ…VIWL).

Belongs to the major facilitator superfamily. Proton-dependent oligopeptide transporter (POT/PTR) (TC 2.A.17) family. DtpD subfamily.

The protein resides in the cell inner membrane. Functionally, probable proton-dependent permease that transports dipeptides. In Klebsiella pneumoniae subsp. pneumoniae (strain ATCC 700721 / MGH 78578), this protein is Dipeptide permease D.